A 240-amino-acid polypeptide reads, in one-letter code: 3-deoxy-D-manno-octulosonic acid kinase (240 aa).

Asp170 is a catalytic residue.

This sequence belongs to the protein kinase superfamily. KdkA/RfaP family.

Its subcellular location is the cell inner membrane. It catalyses the reaction an alpha-Kdo-(2-&gt;6)-lipid IVA + ATP = a 4-O-phospho-alpha-Kdo-(2-&gt;6)-lipid IVA + ADP + H(+). The protein operates within bacterial outer membrane biogenesis; LPS core biosynthesis. Catalyzes the ATP-dependent phosphorylation of the 3-deoxy-D-manno-octulosonic acid (Kdo) residue in Kdo-lipid IV(A) at the 4-OH position. This Actinobacillus succinogenes (strain ATCC 55618 / DSM 22257 / CCUG 43843 / 130Z) protein is 3-deoxy-D-manno-octulosonic acid kinase.